The following is a 385-amino-acid chain: 8-amino-7-oxononanoate synthase (385 aa).

Residue Arg-21 coordinates substrate. 108–109 lines the pyridoxal 5'-phosphate pocket; that stretch reads GY. His-133 contacts substrate. Residues Ser-179, His-207, and Thr-233 each coordinate pyridoxal 5'-phosphate. Lys-236 carries the N6-(pyridoxal phosphate)lysine modification. Thr-350 contacts substrate.

Belongs to the class-II pyridoxal-phosphate-dependent aminotransferase family. BioF subfamily. Homodimer. Pyridoxal 5'-phosphate is required as a cofactor.

The enzyme catalyses 6-carboxyhexanoyl-[ACP] + L-alanine + H(+) = (8S)-8-amino-7-oxononanoate + holo-[ACP] + CO2. It functions in the pathway cofactor biosynthesis; biotin biosynthesis. Functionally, catalyzes the decarboxylative condensation of pimeloyl-[acyl-carrier protein] and L-alanine to produce 8-amino-7-oxononanoate (AON), [acyl-carrier protein], and carbon dioxide. This chain is 8-amino-7-oxononanoate synthase, found in Pectobacterium atrosepticum (strain SCRI 1043 / ATCC BAA-672) (Erwinia carotovora subsp. atroseptica).